The chain runs to 337 residues: Pentalenene synthase (337 aa).

D80 and D84 together coordinate Mg(2+). Residues 80-84 (DDLFD) carry the DDXXD motif motif. An intrachain disulfide couples C128 to C136. N219, S223, and E227 together coordinate Mg(2+).

This sequence belongs to the terpene synthase family. In terms of assembly, monomer. The cofactor is Mg(2+).

It carries out the reaction (2E,6E)-farnesyl diphosphate = pentalenene + diphosphate. Its pathway is sesquiterpene biosynthesis; pentalenene biosynthesis; pentalenene from farnesyl diphosphate: step 1/1. It functions in the pathway antibiotic biosynthesis; pentalenolactone biosynthesis. In terms of biological role, catalyzes the cyclization of farnesyl diphosphate (FPP) to the tricyclic sesquiterpene pentalenene, which is the hydrocarbon precursor of the pentalenolactone family of antibiotics produced by a variety of Streptomyces species. The sequence is that of Pentalenene synthase (penA) from Streptomyces exfoliatus (Streptomyces hydrogenans).